Reading from the N-terminus, the 117-residue chain is Non-specific lipid-transfer protein 3 (117 aa).

Residues 1 to 25 (MAGLVKLSCLVLACMIVAGPIATNA) form the signal peptide. Cystine bridges form between Cys29-Cys76, Cys39-Cys53, Cys54-Cys99, and Cys74-Cys113.

Belongs to the plant LTP family.

Plant non-specific lipid-transfer proteins transfer phospholipids as well as galactolipids across membranes. May play a role in wax or cutin deposition in the cell walls of expanding epidermal cells and certain secretory tissues. The sequence is that of Non-specific lipid-transfer protein 3 (LTP3) from Brassica napus (Rape).